Here is a 784-residue protein sequence, read N- to C-terminus: Protein-tyrosine-phosphatase MKP1 (784 aa).

2 disordered regions span residues 1 to 73 and 94 to 118; these read MVGR…NSKA and PKAG…TGER. Positions 22-34 are enriched in low complexity; the sequence is WRSASWSASRTAS. Phosphothreonine is present on residues Thr-64 and Thr-109. A Tyrosine-protein phosphatase domain is found at 149 to 291; the sequence is ECSKVADHIY…LLQCQKRVHA (143 aa). Residue Cys-235 is the Phosphocysteine intermediate of the active site. 235 to 241 is a substrate binding site; the sequence is CCQGVSR. Residues 488–586 form a disordered region; that stretch reads HSSGSPSSTT…ASPSLAERRG (99 aa). 2 stretches are compositionally biased toward low complexity: residues 489–510 and 521–553; these read SSGS…FLSP and SLKS…LSLL. Residues 554 to 577 show a composition bias toward polar residues; that stretch reads PSQTSPKESRGVNTFLQPSPNRKA. Residues Ser-558 and Ser-572 each carry the phosphoserine modification.

As to quaternary structure, interacts with MPK6. May interact with MPK3 and MPK4. Post-translationally, phosphorylated on threonine and serine residues by MPK6.

The protein localises to the cytoplasm. Its subcellular location is the cytosol. The catalysed reaction is O-phospho-L-tyrosyl-[protein] + H2O = L-tyrosyl-[protein] + phosphate. In terms of biological role, protein-tyrosine-phosphatase that acts as a negative regulator of MPK6 and MPK3 signaling by dephosphorylating and repressing MPK6 and MPK3. Modulates defense response by repressing salicylic acid (SA) production, camalexin biosynthesis and SNC1-mediated responses. Acts as a negative regulator of MPK6-mediated pathogen-associated molecular pattern (PAMP) responses, including MPK6 and MPK3 activation, accumulation of extracellular reactive oxygen species and inhibition of seedling growth. Involved in UV-B stress tolerance. May be involved in salt and genotoxic stress responses. This Arabidopsis thaliana (Mouse-ear cress) protein is Protein-tyrosine-phosphatase MKP1 (MKP1).